The chain runs to 514 residues: Flagellin B (514 aa).

The protein belongs to the bacterial flagellin family. In terms of assembly, heteromer of FlaA and FlaB. FlaB is located proximal to the hook while the remainder of the filament is composed of the predominant FlaA.

It is found in the secreted. The protein localises to the bacterial flagellum. Flagellin is the subunit protein which polymerizes to form the filaments of bacterial flagella. Important for motility and virulence. This is Flagellin B (flaB) from Helicobacter pylori (strain J99 / ATCC 700824) (Campylobacter pylori J99).